Here is a 29-residue protein sequence, read N- to C-terminus: Lambda-theraphotoxin-Ec2b (29 aa).

Intrachain disulfides connect C2–C16, C9–C21, and C15–C25.

It belongs to the neurotoxin 30 (phrixotoxin) family. As to expression, expressed by the venom gland.

It localises to the secreted. Its function is as follows. Insect-selective neurotoxin that potently blocks insect calcium-activated potassium (BKCa) channels (Slo-type) in cockroach dorsal unpaired median (DUM) neurons (IC(50)=25.3 nM). This occurs in the absence of any shifts in the voltage dependence of activation. May interact with the turret and/or loop region of the external entrance to the channel and does not project deeply into the pore of the channel. In vivo, does not show toxicity in mice after intracerebroventricular injection of up to 25 pmol/g (1.8 ug/20 g mouse). This Eucratoscelus constrictus (African red-rump baboon spider) protein is Lambda-theraphotoxin-Ec2b.